We begin with the raw amino-acid sequence, 286 residues long: Beta-lactamase SHV-8 (286 aa).

The first 21 residues, 1 to 21 (MRYIRLCIISLLATLPLAVHA), serve as a signal peptide directing secretion. Catalysis depends on serine 66, which acts as the Acyl-ester intermediate. A disulfide bridge links cysteine 73 with cysteine 119. Glutamate 164 acts as the Proton acceptor in catalysis. Residue 230 to 232 (KTG) coordinates substrate.

This sequence belongs to the class-A beta-lactamase family.

The catalysed reaction is a beta-lactam + H2O = a substituted beta-amino acid. In terms of biological role, SHV enzymes hydrolyze broad spectrum cephalosporins notably cefotaxime and ceftazidime. The polypeptide is Beta-lactamase SHV-8 (bla) (Escherichia coli).